The sequence spans 660 residues: Bifunctional polymyxin resistance protein ArnA (660 aa).

Residues 1 to 304 (MKAVIFAYHD…TLGLVAGARL (304 aa)) form a formyltransferase ArnAFT region. His104 (proton donor; for formyltransferase activity) is an active-site residue. (6R)-10-formyltetrahydrofolate-binding positions include Arg114 and 136 to 140 (VKRAD). The dehydrogenase ArnADH stretch occupies residues 314 to 660 (RRIRVLILGV…RSVDVAERAS (347 aa)). NAD(+) contacts are provided by residues Asp347 and 368–369 (DI). Residues Ala393, Tyr398, and 432–433 (TS) contribute to the UDP-alpha-D-glucuronate site. Catalysis depends on Glu434, which acts as the Proton acceptor; for decarboxylase activity. Residues Arg460, Asn492, 526 to 535 (KLIDGGQQKR), and Tyr613 contribute to the UDP-alpha-D-glucuronate site. Arg619 functions as the Proton donor; for decarboxylase activity in the catalytic mechanism.

It in the N-terminal section; belongs to the Fmt family. UDP-L-Ara4N formyltransferase subfamily. The protein in the C-terminal section; belongs to the NAD(P)-dependent epimerase/dehydratase family. UDP-glucuronic acid decarboxylase subfamily. As to quaternary structure, homohexamer, formed by a dimer of trimers.

The enzyme catalyses UDP-alpha-D-glucuronate + NAD(+) = UDP-beta-L-threo-pentopyranos-4-ulose + CO2 + NADH. The catalysed reaction is UDP-4-amino-4-deoxy-beta-L-arabinose + (6R)-10-formyltetrahydrofolate = UDP-4-deoxy-4-formamido-beta-L-arabinose + (6S)-5,6,7,8-tetrahydrofolate + H(+). Its pathway is nucleotide-sugar biosynthesis; UDP-4-deoxy-4-formamido-beta-L-arabinose biosynthesis; UDP-4-deoxy-4-formamido-beta-L-arabinose from UDP-alpha-D-glucuronate: step 1/3. It functions in the pathway nucleotide-sugar biosynthesis; UDP-4-deoxy-4-formamido-beta-L-arabinose biosynthesis; UDP-4-deoxy-4-formamido-beta-L-arabinose from UDP-alpha-D-glucuronate: step 3/3. It participates in bacterial outer membrane biogenesis; lipopolysaccharide biosynthesis. In terms of biological role, bifunctional enzyme that catalyzes the oxidative decarboxylation of UDP-glucuronic acid (UDP-GlcUA) to UDP-4-keto-arabinose (UDP-Ara4O) and the addition of a formyl group to UDP-4-amino-4-deoxy-L-arabinose (UDP-L-Ara4N) to form UDP-L-4-formamido-arabinose (UDP-L-Ara4FN). The modified arabinose is attached to lipid A and is required for resistance to polymyxin and cationic antimicrobial peptides. This is Bifunctional polymyxin resistance protein ArnA from Salmonella choleraesuis (strain SC-B67).